Consider the following 137-residue polypeptide: Small ribosomal subunit protein uS12 (137 aa).

The tract at residues 1 to 55 (MPTINQLVRKPRQSKIKKSDSPALNKGFNSKKKKFTDLNSPQKRGVCTRVGTMTP) is disordered. Residue aspartate 102 is modified to 3-methylthioaspartic acid. The disordered stretch occupies residues 118 to 137 (SGVDGRRQGRSLYGTKKPKN).

This sequence belongs to the universal ribosomal protein uS12 family. Part of the 30S ribosomal subunit. Contacts proteins S8 and S17. May interact with IF1 in the 30S initiation complex.

In terms of biological role, with S4 and S5 plays an important role in translational accuracy. Functionally, interacts with and stabilizes bases of the 16S rRNA that are involved in tRNA selection in the A site and with the mRNA backbone. Located at the interface of the 30S and 50S subunits, it traverses the body of the 30S subunit contacting proteins on the other side and probably holding the rRNA structure together. The combined cluster of proteins S8, S12 and S17 appears to hold together the shoulder and platform of the 30S subunit. The sequence is that of Small ribosomal subunit protein uS12 from Staphylococcus aureus (strain Mu3 / ATCC 700698).